Here is a 117-residue protein sequence, read N- to C-terminus: CUE domain-containing protein CUE4 (117 aa).

Residues 27–74 (QVPSRTVQDAKPAPSVATNDPSPEPVPSAPEERVARLNRHGSDRKRAV) form a disordered region. Lysine 37 is covalently cross-linked (Glycyl lysine isopeptide (Lys-Gly) (interchain with G-Cter in ubiquitin)). A Phosphoserine modification is found at serine 48. A compositionally biased stretch (basic and acidic residues) spans 56-74 (PEERVARLNRHGSDRKRAV). Residues 74-116 (VNSDMVEIVMTMAPHVPQEKVVQDLRNTGSIEHTMENIFAGKL) form the CUE domain.

In terms of processing, ubiquitinated.

It is found in the cytoplasm. The protein resides in the endoplasmic reticulum. In Saccharomyces cerevisiae (strain ATCC 204508 / S288c) (Baker's yeast), this protein is CUE domain-containing protein CUE4 (CUE4).